The sequence spans 503 residues: Aspartyl/glutamyl-tRNA(Asn/Gln) amidotransferase subunit B (503 aa).

This sequence belongs to the GatB/GatE family. GatB subfamily. As to quaternary structure, heterotrimer of A, B and C subunits.

It catalyses the reaction L-glutamyl-tRNA(Gln) + L-glutamine + ATP + H2O = L-glutaminyl-tRNA(Gln) + L-glutamate + ADP + phosphate + H(+). The catalysed reaction is L-aspartyl-tRNA(Asn) + L-glutamine + ATP + H2O = L-asparaginyl-tRNA(Asn) + L-glutamate + ADP + phosphate + 2 H(+). Functionally, allows the formation of correctly charged Asn-tRNA(Asn) or Gln-tRNA(Gln) through the transamidation of misacylated Asp-tRNA(Asn) or Glu-tRNA(Gln) in organisms which lack either or both of asparaginyl-tRNA or glutaminyl-tRNA synthetases. The reaction takes place in the presence of glutamine and ATP through an activated phospho-Asp-tRNA(Asn) or phospho-Glu-tRNA(Gln). The sequence is that of Aspartyl/glutamyl-tRNA(Asn/Gln) amidotransferase subunit B from Cereibacter sphaeroides (strain ATCC 17029 / ATH 2.4.9) (Rhodobacter sphaeroides).